We begin with the raw amino-acid sequence, 1422 residues long: Cardiac-enriched FHL2-interacting protein (1422 aa).

A disordered region spans residues 1–23; that stretch reads MQGNKKCADGFSDTSSIGSVLDE. At Thr-119 the chain carries Phosphothreonine. 9 disordered regions span residues 151 to 177, 199 to 265, 279 to 443, 459 to 500, 516 to 718, 731 to 850, 877 to 1127, 1142 to 1244, and 1353 to 1422; these read RTEA…KFAH, AGVS…GRGK, SAFE…SSPF, LETS…KAPS, YSPL…SDSQ, FSTS…TNKH, VSSE…HLER, TGAA…GWEP, and RQGS…EGVS. Residues 201-210 show a composition bias toward polar residues; it reads VSSTHQSSHQ. Composition is skewed to basic and acidic residues over residues 284-298 and 305-315; these read WDAH…KDIT and KAPKHYEDMPL. Ser-327 is modified (phosphoserine). Positions 342-351 are enriched in polar residues; that stretch reads SPSGIQSTSG. A compositionally biased stretch (basic and acidic residues) spans 395-405; the sequence is GPHDASEDKKQ. Residues 461-470 show a composition bias toward polar residues; it reads TSDTQPVETS. A Phosphoserine modification is found at Ser-472. 3 stretches are compositionally biased toward basic and acidic residues: residues 481 to 495, 524 to 537, and 579 to 588; these read QEKE…DSYK, GFDE…DGKQ, and PAMDSRESFA. Low complexity predominate over residues 590 to 606; the sequence is SHPTFSSPSASSKTHFS. 3 stretches are compositionally biased toward basic and acidic residues: residues 611 to 622, 635 to 644, and 653 to 675; these read AAERNSHEKEEA, WHPDSRENLP, and CNRD…EKRL. Residues 731 to 744 show a composition bias toward low complexity; the sequence is FSTSSSDQSFASFE. Residues 790–801 show a composition bias toward basic and acidic residues; the sequence is GVEEHRQKETQR. Ser-815 is modified (phosphoserine). A compositionally biased stretch (basic and acidic residues) spans 828–839; sequence ADKDTALSHAKD. Polar residues-rich tracts occupy residues 907-926 and 944-954; these read SESQ…STEQ and QDETSQQTRKG. The segment covering 975–991 has biased composition (basic and acidic residues); sequence ADERLAHEKSRSADSGK. Polar residues predominate over residues 1048 to 1067; it reads AATSPNPSSLGGSSTCSPAA. Over residues 1087–1099 the composition is skewed to pro residues; it reads PPGPGPWASPGPS. Residues 1173-1184 are compositionally biased toward basic residues; sequence RRAKKLASKRRK. Residues 1185-1202 are compositionally biased toward basic and acidic residues; it reads SDQMSEKHTEAWEGKSFT. Over residues 1353-1366 the composition is skewed to polar residues; sequence RQGSSHRPQSSQGA. Positions 1411-1422 are enriched in acidic residues; that stretch reads DDLEDFATEGVS.

As to quaternary structure, interacts with FHL2.

It is found in the cytoplasm. It localises to the myofibril. Its subcellular location is the sarcomere. The protein localises to the z line. Plays an important role in cardiomyocyte hypertrophy via activation of the calcineurin/NFAT signaling pathway. The sequence is that of Cardiac-enriched FHL2-interacting protein from Rattus norvegicus (Rat).